The sequence spans 352 residues: Peptide chain release factor 1 (352 aa).

Glutamine 229 carries the post-translational modification N5-methylglutamine.

It belongs to the prokaryotic/mitochondrial release factor family. Post-translationally, methylated by PrmC. Methylation increases the termination efficiency of RF1.

The protein resides in the cytoplasm. In terms of biological role, peptide chain release factor 1 directs the termination of translation in response to the peptide chain termination codons UAG and UAA. This Gluconacetobacter diazotrophicus (strain ATCC 49037 / DSM 5601 / CCUG 37298 / CIP 103539 / LMG 7603 / PAl5) protein is Peptide chain release factor 1.